The following is a 385-amino-acid chain: Isocitrate dehydrogenase [NAD] subunit beta, mitochondrial (385 aa).

The transit peptide at 1-34 (MAALSGVRWLTRALVSAGNPGAWRGLSTSAAAHA) directs the protein to the mitochondrion. Lysine 199 bears the N6-acetyllysine mark.

It belongs to the isocitrate and isopropylmalate dehydrogenases family. Heterooligomer of subunits alpha (IDH3A), beta (IDH3B), and gamma (IDH3G) in the apparent ratio of 2:1:1. The heterodimer containing one IDH3A and one IDH3B subunit and the heterodimer containing one IDH3A and one IDH3G subunit assemble into a heterotetramer (which contains two subunits of IDH3A, one of IDH3B and one of IDH3G) and further into the heterooctamer.

The protein localises to the mitochondrion. With respect to regulation, the heterotetramer and the heterodimer composed of IDH3A and IDH3G subunits can be allosterically activated by citrate (CIT) or/and ADP, and the two activators can act independently or synergistically. The heterodimer composed of IDH3A and IDH3B subunits cannot be allosterically regulated and the allosteric regulation of the heterotetramer is through the IDH3G subunit and not the IDH3B subunit. The IDH3G subunit contains the allosteric site which consists of a CIT-binding site and an ADP-binding site, and the binding of CIT and ADP causes conformational changes at the allosteric site which are transmitted to the active site in the catalytic subunit (IDH3A) through a cascade of conformational changes at the heterodimer interface, leading to stabilization of the isocitrate-binding at the active site and thus activation of the enzyme. ATP can activate the heterotetramer and the heterodimer composed of IDH3A and IDH3G subunits at low concentrations but inhibits their activities at high concentrations, whereas ATP exhibits only inhibitory effect on the heterodimer composed of IDH3A and IDH3B subunits. Plays a structural role to facilitate the assembly and ensure the full activity of the enzyme catalyzing the decarboxylation of isocitrate (ICT) into alpha-ketoglutarate. The heterodimer composed of the alpha (IDH3A) and beta (IDH3B) subunits and the heterodimer composed of the alpha (IDH3A) and gamma (IDH3G) subunits, have considerable basal activity but the full activity of the heterotetramer (containing two subunits of IDH3A, one of IDH3B and one of IDH3G) requires the assembly and cooperative function of both heterodimers. This is Isocitrate dehydrogenase [NAD] subunit beta, mitochondrial (IDH3B) from Homo sapiens (Human).